Consider the following 450-residue polypeptide: MDTIVAVATPPGKGAIAILRLSGPDSWKIVQKHLRTRSEIVPRKAIHGWIHENGEDVDEVVVIFYKSPKSYTGEDMVEVMCHGGPLVVKKLLDLFLKSGARMAEPGEFTKRAFLNGKMDLTSAEAVRDLIEAKSETSLKLSLRNLKGGLKDFVESLRRELIEVLAEIRVELDYPDEIETNTGEVVTRLERIKEKLTKELKKADAGILLNRGFRMVIVGKPNVGKSTLLNRLLNEDRAIVTDIPGTTRDVISEEIVIRGILFRIVDTAGVRSETNDLVERLGIERTLQEIEKADIVLFVLDASSPLDEEDRKILERIKNKRYLVVINKVDVVEKINEEEIKNKLGTDRHMVKISALKGEGLEKLEEAIYRETQEIFERGSDSLITNLRQKQLLENVKGHLEDAIKSLKEGMPVDMASIDLERALSLLDEVTGRSFREDLLDTIFSNFCVGK.

3 residues coordinate (6S)-5-formyl-5,6,7,8-tetrahydrofolate: Arg20, Glu78, and Lys117. The 162-residue stretch at 211 to 372 folds into the TrmE-type G domain; the sequence is GFRMVIVGKP…LEEAIYRETQ (162 aa). Asn221 lines the K(+) pocket. Residues 221–226, 240–246, and 265–268 each bind GTP; these read NVGKST, TDIPGTT, and DTAG. Ser225 contributes to the Mg(2+) binding site. Thr240, Ile242, and Thr245 together coordinate K(+). A Mg(2+)-binding site is contributed by Thr246. Residue Lys450 coordinates (6S)-5-formyl-5,6,7,8-tetrahydrofolate.

Belongs to the TRAFAC class TrmE-Era-EngA-EngB-Septin-like GTPase superfamily. TrmE GTPase family. In terms of assembly, homodimer. Heterotetramer of two MnmE and two MnmG subunits. Requires K(+) as cofactor.

The protein localises to the cytoplasm. Exhibits a very high intrinsic GTPase hydrolysis rate. Involved in the addition of a carboxymethylaminomethyl (cmnm) group at the wobble position (U34) of certain tRNAs, forming tRNA-cmnm(5)s(2)U34. In Thermotoga petrophila (strain ATCC BAA-488 / DSM 13995 / JCM 10881 / RKU-1), this protein is tRNA modification GTPase MnmE.